A 281-amino-acid chain; its full sequence is Glycerol uptake facilitator protein (281 aa).

At 1-5 (MSQTS) the chain is on the cytoplasmic side. The chain crosses the membrane as a helical span at residues 6–34 (TLKGQCIAEFLGTGLLIFFGVGCVAALKV). The Periplasmic segment spans residues 35-39 (AGASF). The helical transmembrane segment at 40 to 60 (GQWEISVIWGLGVAMAIYLTA) threads the bilayer. Residues 61–63 (GVS) lie on the Cytoplasmic side of the membrane. The stretch at 64–67 (GAHL) is an intramembrane region. The short motif at 68 to 70 (NPA) is the NPA 1 element. Residues 68–78 (NPAVTIALWLF) constitute an intramembrane region (helical). Over 79 to 84 (ACFDKR) the chain is Cytoplasmic. A helical transmembrane segment spans residues 85-108 (KVIPFIVSQVAGAFCAAALVYGLY). The Periplasmic portion of the chain corresponds to 109 to 143 (YNLFFDFEQTHHIVRGSVESVDLAGTFSTYPNPHI). Residues 144-169 (NFVQAFAVEMVITAILMGLILALTDD) form a helical membrane-spanning segment. Over 170-177 (GNGVPRGP) the chain is Cytoplasmic. A helical membrane pass occupies residues 178 to 194 (LAPLLIGLLIAVIGASM). Residues 195–198 (GPLT) lie on the Periplasmic side of the membrane. Residues 199-202 (GFAM) lie within the membrane without spanning it. Residues 203-205 (NPA) carry the NPA 2 motif. Residues 203–216 (NPARDFGPKVFAWL) constitute an intramembrane region (helical). The Periplasmic segment spans residues 217–231 (AGWGNVAFTGGRDIP). Residues 232-254 (YFLVPLFGPIVGAIVGAFAYRKL) form a helical membrane-spanning segment. The Cytoplasmic portion of the chain corresponds to 255-281 (IGRHLPCDICVVEEKETTTPSEQKASL).

The protein belongs to the MIP/aquaporin (TC 1.A.8) family. In terms of assembly, homotetramer.

Its subcellular location is the cell inner membrane. It carries out the reaction glycerol(in) = glycerol(out). Functionally, mediates glycerol diffusion across the cytoplasmic membrane via a pore-type mechanism. The sequence is that of Glycerol uptake facilitator protein (glpF) from Escherichia coli O157:H7.